We begin with the raw amino-acid sequence, 78 residues long: Acyl carrier protein (78 aa).

The 76-residue stretch at 2-77 folds into the Carrier domain; the sequence is SDTAERVKKI…DAVKFIDKAS (76 aa). The residue at position 37 (Ser-37) is an O-(pantetheine 4'-phosphoryl)serine.

This sequence belongs to the acyl carrier protein (ACP) family. 4'-phosphopantetheine is transferred from CoA to a specific serine of apo-ACP by AcpS. This modification is essential for activity because fatty acids are bound in thioester linkage to the sulfhydryl of the prosthetic group.

The protein resides in the cytoplasm. It functions in the pathway lipid metabolism; fatty acid biosynthesis. Carrier of the growing fatty acid chain in fatty acid biosynthesis. The polypeptide is Acyl carrier protein (Brucella abortus (strain S19)).